The chain runs to 317 residues: Large ribosomal subunit protein uL10 (317 aa).

It belongs to the universal ribosomal protein uL10 family. As to quaternary structure, P0 forms a pentameric complex by interaction with dimers of P1 and P2. In terms of processing, phosphorylated.

In terms of biological role, ribosomal protein P0 is the functional equivalent of E.coli protein L10. This Ictalurus punctatus (Channel catfish) protein is Large ribosomal subunit protein uL10 (rplp0).